The following is a 159-amino-acid chain: Transcriptional repressor NrdR (159 aa).

A zinc finger lies at 3 to 34 (CPFCGSDNTSVKDSRAAEDDTAVRRRRVCESC). The ATP-cone domain occupies 49 to 139 (IIVVKRDGKR…VYRDFKDPSD (91 aa)).

It belongs to the NrdR family. Requires Zn(2+) as cofactor.

In terms of biological role, negatively regulates transcription of bacterial ribonucleotide reductase nrd genes and operons by binding to NrdR-boxes. The polypeptide is Transcriptional repressor NrdR (Hyphomonas neptunium (strain ATCC 15444)).